The chain runs to 401 residues: Nodal homolog 3-B (401 aa).

Positions 1-18 (MAFLSLFLCLVFSSPLMA) are cleaved as a signal peptide. Positions 19-274 (MPPALQGRKA…KVNGFRRLRR (256 aa)) are excised as a propeptide. Asparagine 168, asparagine 337, and asparagine 344 each carry an N-linked (GlcNAc...) asparagine glycan. Intrachain disulfides connect cysteine 299–cysteine 365 and cysteine 328–cysteine 396.

This sequence belongs to the TGF-beta family. Monomer. The propeptide region interacts with bmp4 in a non-covalent manner. As to expression, expressed in the dorsal marginal region of late blastula, becoming restricted to the Spemann organizer at the early gastrula stage.

It is found in the secreted. Functionally, exhibits mesoderm-dorsalizing activity and neural-inducing activity, but lacks mesoderm-inducing activity. Regulates the expression of specific mesodermal and neural genes. Induces convergent extension movements at the embryonic midline by activating the fgf signaling pathway to induce t/bra expression in the organizer region. Acts with wnt11 to induce Spemann organizer cells and induce axis formation. The unprocessed protein antagonizes bmp-signaling. This is Nodal homolog 3-B from Xenopus tropicalis (Western clawed frog).